We begin with the raw amino-acid sequence, 210 residues long: Cell wall protein SRL1 (210 aa).

Residues 1-19 (MLQSVVFFALLTFASSVSA) form the signal peptide. The N-linked (GlcNAc...) asparagine glycan is linked to asparagine 23. 2 disordered regions span residues 80–99 (SLSTSSASGSVTPESTHEIT) and 118–142 (LSPSSTAASVSDEDSNNKDAKVKSF). The span at 118–127 (LSPSSTAASV) shows a compositional bias: low complexity. Over residues 132 to 141 (SNNKDAKVKS) the composition is skewed to basic and acidic residues. N-linked (GlcNAc...) asparagine glycans are attached at residues asparagine 174, asparagine 200, and asparagine 206.

The protein localises to the secreted. It localises to the cell wall. The protein resides in the cell surface. In terms of biological role, required to stabilize the cell wall in the absence of multiple GPI-anchored mannoproteins. The chain is Cell wall protein SRL1 (SRL1) from Saccharomyces cerevisiae (strain ATCC 204508 / S288c) (Baker's yeast).